The chain runs to 337 residues: MSKINLLLLCGGGSAEHDISLMSANYFETSLAKSEQFSVLRVELDKFGQYRTAAGDDCELTNSREIRFRDESKTPWPVDYVIPCIHGYPGETGDIQSYFNLIQLPYFGCESEASSNCFNKITAKMWFSALGIPNTPYIFLNQFDDAAIEQTQTALAQWGSIFVKAASQGSSVGCYKVDDSAKVAGVLKDAFGYAPYVIVEKTIKARELEVAVYEYNGEVVATVPGEIICDTNTFYTFDEKYAKNSKARTDVVAQHVSAEISEQIRAYAIKAFKGMKLRHLSRIDFFLTADNEILLNEINTFPGSTPISMFPKMLQNHGHDFTEYLSLVINGQLTAKS.

In terms of domain architecture, ATP-grasp spans Lys-124–Asn-330. Ala-154–Glu-209 contributes to the ATP binding site. Residues Asp-284, Glu-297, and Asn-299 each contribute to the Mg(2+) site.

It belongs to the D-alanine--D-alanine ligase family. It depends on Mg(2+) as a cofactor. Requires Mn(2+) as cofactor.

Its subcellular location is the cytoplasm. The catalysed reaction is 2 D-alanine + ATP = D-alanyl-D-alanine + ADP + phosphate + H(+). The protein operates within cell wall biogenesis; peptidoglycan biosynthesis. Its function is as follows. Cell wall formation. The polypeptide is D-alanine--D-alanine ligase (Shewanella baltica (strain OS223)).